The following is a 197-amino-acid chain: Probable GTP-binding protein EngB (197 aa).

The EngB-type G domain occupies 22-194 (DLPEIAFAGR…LETIARMTGI (173 aa)). GTP contacts are provided by residues 30-37 (GRSNVGKS), 57-61 (GKTRL), 75-78 (DLPG), 142-145 (TKAD), and 173-175 (FST). Ser37 and Thr59 together coordinate Mg(2+).

This sequence belongs to the TRAFAC class TrmE-Era-EngA-EngB-Septin-like GTPase superfamily. EngB GTPase family. Mg(2+) serves as cofactor.

In terms of biological role, necessary for normal cell division and for the maintenance of normal septation. This chain is Probable GTP-binding protein EngB, found in Desulfosudis oleivorans (strain DSM 6200 / JCM 39069 / Hxd3) (Desulfococcus oleovorans).